The sequence spans 248 residues: Triosephosphate isomerase (248 aa).

Substrate contacts are provided by Asn12 and Lys14. An N6-acetyllysine modification is found at Lys14. A 3'-nitrotyrosine modification is found at Tyr68. Catalysis depends on His96, which acts as the Electrophile. A Phosphoserine modification is found at Ser106. Lys142 participates in a covalent cross-link: Glycyl lysine isopeptide (Lys-Gly) (interchain with G-Cter in SUMO1). Lys149 bears the N6-succinyllysine mark. Lys156 carries the N6-acetyllysine; alternate modification. An N6-succinyllysine; alternate modification is found at Lys156. Glu166 functions as the Proton acceptor in the catalytic mechanism. Thr173 bears the Phosphothreonine mark. At Lys194 the chain carries N6-acetyllysine; alternate. An N6-succinyllysine; alternate modification is found at Lys194. Position 194 is an N6-methyllysine; alternate (Lys194). Residue Tyr209 is modified to 3'-nitrotyrosine. At Ser212 the chain carries Phosphoserine. The residue at position 214 (Thr214) is a Phosphothreonine. The residue at position 223 (Ser223) is a Phosphoserine. Lys238 is modified (N6-acetyllysine).

This sequence belongs to the triosephosphate isomerase family. As to quaternary structure, homodimer.

It is found in the cytoplasm. It catalyses the reaction dihydroxyacetone phosphate = methylglyoxal + phosphate. The enzyme catalyses D-glyceraldehyde 3-phosphate = dihydroxyacetone phosphate. Its pathway is carbohydrate degradation; glycolysis; D-glyceraldehyde 3-phosphate from glycerone phosphate: step 1/1. It participates in carbohydrate biosynthesis; gluconeogenesis. Triosephosphate isomerase is an extremely efficient metabolic enzyme that catalyzes the interconversion between dihydroxyacetone phosphate (DHAP) and D-glyceraldehyde-3-phosphate (G3P) in glycolysis and gluconeogenesis. Functionally, it is also responsible for the non-negligible production of methylglyoxal a reactive cytotoxic side-product that modifies and can alter proteins, DNA and lipids. This is Triosephosphate isomerase (TPI1) from Sus scrofa (Pig).